The sequence spans 170 residues: Large ribosomal subunit protein bL9 (170 aa).

The interval 149-170 (RTEEADAEESAAEEPAVEEAAE) is disordered. The segment covering 153–170 (ADAEESAAEEPAVEEAAE) has biased composition (acidic residues).

It belongs to the bacterial ribosomal protein bL9 family.

Its function is as follows. Binds to the 23S rRNA. The chain is Large ribosomal subunit protein bL9 from Oleidesulfovibrio alaskensis (strain ATCC BAA-1058 / DSM 17464 / G20) (Desulfovibrio alaskensis).